The following is a 319-amino-acid chain: MAKGIRHHRVGEAVDGYLLIKTATKQIASNSKPFLTLILGDHTGEIEAKLWGISPEDEATFVNKTIVHIQGDVIDYRGRLQLKIASIRPTSAMDGVHLNDFVRSAPLAPNDMLDEVNQYIFEIHNPHIQRITRFLLKKHQQAFLESPAATKNHHEFMSGLAFHVVSMLRIGKSLIELYPTLDKDLLYAGIILHDLGKVRELSGAIDTTYTLEGKLLGHISIMSNEIAQAAKELEIDGEEVLILQHLILSHHGKGEWGSPKTPVVREAEVLHLIDNIDAKINMMDRALERVQPGEFSERVMALDNRSFYKPSFHKKPIEL.

A DNA-binding region (OB) is located at residues 12 to 90 (EAVDGYLLIK…QLKIASIRPT (79 aa)). In terms of domain architecture, HD spans 163 to 279 (HVVSMLRIGK…LHLIDNIDAK (117 aa)).

It belongs to the YhaM family.

Functionally, shows a 3'-5' exoribonuclease activity. The chain is 3'-5' exoribonuclease YhaM from Shouchella clausii (strain KSM-K16) (Alkalihalobacillus clausii).